Here is a 433-residue protein sequence, read N- to C-terminus: Pyrimidine-nucleoside phosphorylase (433 aa).

Residue 81–83 (KHS) coordinates phosphate. Positions 88 and 90 each coordinate K(+). Phosphate-binding positions include threonine 92, 108–110 (KMS), and threonine 120. Residues arginine 168 and lysine 187 each coordinate substrate. Residues leucine 243, alanine 246, and glutamate 255 each coordinate K(+).

Belongs to the thymidine/pyrimidine-nucleoside phosphorylase family. In terms of assembly, homodimer. Requires K(+) as cofactor.

The catalysed reaction is uridine + phosphate = alpha-D-ribose 1-phosphate + uracil. It catalyses the reaction thymidine + phosphate = 2-deoxy-alpha-D-ribose 1-phosphate + thymine. The enzyme catalyses 2'-deoxyuridine + phosphate = 2-deoxy-alpha-D-ribose 1-phosphate + uracil. Functionally, catalyzes phosphorolysis of the pyrimidine nucleosides uridine, thymidine and 2'-deoxyuridine with the formation of the corresponding pyrimidine base and ribose-1-phosphate. In Staphylococcus aureus (strain MSSA476), this protein is Pyrimidine-nucleoside phosphorylase (pdp).